Reading from the N-terminus, the 260-residue chain is Aliphatic sulfonates import ATP-binding protein SsuB 1 (260 aa).

Residues V29–L243 enclose the ABC transporter domain. G61 to S68 provides a ligand contact to ATP.

This sequence belongs to the ABC transporter superfamily. Aliphatic sulfonates importer (TC 3.A.1.17.2) family. The complex is composed of two ATP-binding proteins (SsuB), two transmembrane proteins (SsuC) and a solute-binding protein (SsuA).

It localises to the cell membrane. The catalysed reaction is ATP + H2O + aliphatic sulfonate-[sulfonate-binding protein]Side 1 = ADP + phosphate + aliphatic sulfonateSide 2 + [sulfonate-binding protein]Side 1.. Functionally, part of the ABC transporter complex SsuABC involved in aliphatic sulfonates import. Responsible for energy coupling to the transport system. The protein is Aliphatic sulfonates import ATP-binding protein SsuB 1 of Streptomyces avermitilis (strain ATCC 31267 / DSM 46492 / JCM 5070 / NBRC 14893 / NCIMB 12804 / NRRL 8165 / MA-4680).